The chain runs to 146 residues: Bifunctional adenosine 5'-phosphosulfate phosphorylase/adenylylsulfatase HINT4 (146 aa).

Residues 9–120 form the HIT domain; sequence IFCEIVRNPT…YVPRWKAIKY (112 aa). A Histidine triad motif motif is present at residues 101–105; sequence HLHLH. Catalysis depends on H105, which acts as the Tele-AMP-histidine intermediate.

As to quaternary structure, homodimer.

It is found in the peroxisome. The enzyme catalyses sulfate + ADP + H(+) = adenosine 5'-phosphosulfate + phosphate. It catalyses the reaction adenosine 5'-phosphosulfate + H2O = sulfate + AMP + 2 H(+). The adenosine 5'-phosphosulfate phosphorylase activity is enhanced at low pH. Its function is as follows. Possesses adenylylsulfatase activity in vitro, releasing AMP and sulfate from adenylyl sulfate. Also possesses adenosine 5'-phosphosulfate (APS) phosphorylase activity in vitro. Catalyzes the phosphorolysis of APS, leading to ADP and sulfate. The chain is Bifunctional adenosine 5'-phosphosulfate phosphorylase/adenylylsulfatase HINT4 from Arabidopsis thaliana (Mouse-ear cress).